The following is a 65-amino-acid chain: Large ribosomal subunit protein bL35 (65 aa).

Positions 1-15 (MPKMKTKSSAKKRFS) are enriched in basic residues. The segment at 1-21 (MPKMKTKSSAKKRFSIRAGGS) is disordered.

This sequence belongs to the bacterial ribosomal protein bL35 family.

The polypeptide is Large ribosomal subunit protein bL35 (Dechloromonas aromatica (strain RCB)).